We begin with the raw amino-acid sequence, 197 residues long: Pyridoxal 5'-phosphate synthase subunit PdxT (197 aa).

53-55 (GES) contacts L-glutamine. The active-site Nucleophile is the cysteine 85. Residues arginine 114 and 142–143 (IR) each bind L-glutamine. Catalysis depends on charge relay system residues histidine 179 and glutamate 181.

This sequence belongs to the glutaminase PdxT/SNO family. In terms of assembly, in the presence of PdxS, forms a dodecamer of heterodimers. Only shows activity in the heterodimer.

The catalysed reaction is aldehydo-D-ribose 5-phosphate + D-glyceraldehyde 3-phosphate + L-glutamine = pyridoxal 5'-phosphate + L-glutamate + phosphate + 3 H2O + H(+). The enzyme catalyses L-glutamine + H2O = L-glutamate + NH4(+). Its pathway is cofactor biosynthesis; pyridoxal 5'-phosphate biosynthesis. In terms of biological role, catalyzes the hydrolysis of glutamine to glutamate and ammonia as part of the biosynthesis of pyridoxal 5'-phosphate. The resulting ammonia molecule is channeled to the active site of PdxS. The chain is Pyridoxal 5'-phosphate synthase subunit PdxT from Thermococcus onnurineus (strain NA1).